The following is a 568-amino-acid chain: 2-succinyl-5-enolpyruvyl-6-hydroxy-3-cyclohexene-1-carboxylate synthase (568 aa).

The protein belongs to the TPP enzyme family. MenD subfamily. Homodimer. Requires Mg(2+) as cofactor. The cofactor is Mn(2+). Thiamine diphosphate is required as a cofactor.

The enzyme catalyses isochorismate + 2-oxoglutarate + H(+) = 5-enolpyruvoyl-6-hydroxy-2-succinyl-cyclohex-3-ene-1-carboxylate + CO2. It functions in the pathway quinol/quinone metabolism; 1,4-dihydroxy-2-naphthoate biosynthesis; 1,4-dihydroxy-2-naphthoate from chorismate: step 2/7. Its pathway is quinol/quinone metabolism; menaquinone biosynthesis. Its function is as follows. Catalyzes the thiamine diphosphate-dependent decarboxylation of 2-oxoglutarate and the subsequent addition of the resulting succinic semialdehyde-thiamine pyrophosphate anion to isochorismate to yield 2-succinyl-5-enolpyruvyl-6-hydroxy-3-cyclohexene-1-carboxylate (SEPHCHC). In Pasteurella multocida (strain Pm70), this protein is 2-succinyl-5-enolpyruvyl-6-hydroxy-3-cyclohexene-1-carboxylate synthase.